The following is a 626-amino-acid chain: UvrABC system protein C (626 aa).

A GIY-YIG domain is found at 20–97 (ECSGVYKMLD…IKKFQPKFNI (78 aa)). Residues 207–242 (IALQANLSKKMQELSSQMRFEEAAEIRDRIKALSYV) enclose the UVR domain.

The protein belongs to the UvrC family. Interacts with UvrB in an incision complex.

Its subcellular location is the cytoplasm. The UvrABC repair system catalyzes the recognition and processing of DNA lesions. UvrC both incises the 5' and 3' sides of the lesion. The N-terminal half is responsible for the 3' incision and the C-terminal half is responsible for the 5' incision. This chain is UvrABC system protein C, found in Rickettsia prowazekii (strain Madrid E).